A 701-amino-acid chain; its full sequence is Elongation factor G (701 aa).

In terms of domain architecture, tr-type G spans 11–287; that stretch reads TKVRNIGIMA…AVIDYLPSPL (277 aa). Residues 20-27, 84-88, and 138-141 contribute to the GTP site; these read AHIDAGKT, DTPGH, and NKMD.

It belongs to the TRAFAC class translation factor GTPase superfamily. Classic translation factor GTPase family. EF-G/EF-2 subfamily.

It localises to the cytoplasm. Its function is as follows. Catalyzes the GTP-dependent ribosomal translocation step during translation elongation. During this step, the ribosome changes from the pre-translocational (PRE) to the post-translocational (POST) state as the newly formed A-site-bound peptidyl-tRNA and P-site-bound deacylated tRNA move to the P and E sites, respectively. Catalyzes the coordinated movement of the two tRNA molecules, the mRNA and conformational changes in the ribosome. This is Elongation factor G from Mycobacterium marinum (strain ATCC BAA-535 / M).